The chain runs to 511 residues: MTNTIVISCLHNIAAILYCGQIQKLVVANAHYQVSDIYLGTVDKIFSGINAAFVDLGKNEYSGFIHISDTGPLKKKYYINNITNILTIRQKILVQIIKEPTLNKGPRLTANITLSGRYIVLMPFSQAICISRKIYDEDERHYLKALAILIKPPTMGLLFRPSAIGIDEEIILSELTNLKEQWYFIQKSAINNCAPVLLYKDEDIVKKVIRDFYDNNTKNIVIDSNLGLKQLNYYINTWQCNFSSTIPSLQLYSSNKCILDTFRINQAISRALIPKVDLILGGYMFIETLEAFTIIDVNSGSFNNSTSARETVLKTNCSAATEIAYQLKIRNIAGVIIIDFIDMESQRDQLQLLEHFDKELSLDDAKPQIVQLSELGLVELTRRRKGKSLYELVSNDSNYFHFFIQLEQLDSIKPSSYKSKRLSSSVKSWLFSEIDMINRVFFKKSNLYRLSNFYYARNLYIIYSDFTVNKNIQLAARYKLMYSLQNIQILPSTWYFNFLDIHTNNITNYLS.

In terms of domain architecture, S1 motif spans 35 to 117; that stretch reads SDIYLGTVDK…LTANITLSGR (83 aa). Mg(2+)-binding residues include aspartate 296 and aspartate 339.

The protein belongs to the RNase E/G family. Requires Mg(2+) as cofactor.

It localises to the plastid. It is found in the chloroplast stroma. Involved in intercistronic processing of primary transcripts from chloroplast operons. The endonucleolytic activity of the enzyme depends on the number of phosphates at the 5' end, is inhibited by structured RNA, and preferentially cleaves A/U-rich sequences. This is Ribonuclease E/G-like protein (rne) from Porphyra purpurea (Red seaweed).